The primary structure comprises 383 residues: Probable cell wall hydrolase LytN (383 aa).

The N-terminal stretch at 1–49 (MFIYYCKECSIMNKQQSKVRYSIRKVSIGILSISIGMFLALGMSNKAYA) is a signal peptide. The LysM domain maps to 175-219 (QIYTVKKGDTLSAIALKYKTTVSNIQNTNNIANPNLIFIGQKLKV). The Peptidase C51 domain maps to 241–378 (NSSTLNYLKT…NYENDMIFIR (138 aa)).

It localises to the secreted. Probably involved in peptidoglycan hydrolysis. This chain is Probable cell wall hydrolase LytN (lytN), found in Staphylococcus aureus (strain Mu50 / ATCC 700699).